A 21-amino-acid polypeptide reads, in one-letter code: Magainin-B1 (21 aa).

As to expression, expressed by the skin glands.

The protein resides in the secreted. Has no antimicrobial activity against tested bacteria. In Xenopus borealis (Kenyan clawed frog), this protein is Magainin-B1.